The following is a 323-amino-acid chain: Aldo-keto reductase family 1 member C1 (323 aa).

NADP(+) contacts are provided by residues 20–24 (GFGTY) and D50. Substrate is bound at residue Y24. Y55 functions as the Proton donor in the catalytic mechanism. Substrate is bound at residue H117. NADP(+) is bound by residues 166 to 167 (SN), Q190, and 216 to 222 (YSALGSH). Residues H222 and W227 each coordinate substrate. 270 to 280 (KSYNEQRIRQN) is a binding site for NADP(+).

Belongs to the aldo/keto reductase family. As to quaternary structure, monomer.

Its subcellular location is the cytoplasm. The protein resides in the cytosol. It catalyses the reaction a 3alpha-hydroxysteroid + NADP(+) = a 3-oxosteroid + NADPH + H(+). The catalysed reaction is a 3alpha-hydroxysteroid + NAD(+) = a 3-oxosteroid + NADH + H(+). It carries out the reaction (17R,20S)-17,20-dihydroxypregn-4-en-3-one + NADP(+) = 17alpha-hydroxyprogesterone + NADPH + H(+). The enzyme catalyses (17R,20S)-17,20-dihydroxypregn-4-en-3-one + NAD(+) = 17alpha-hydroxyprogesterone + NADH + H(+). It catalyses the reaction (20S)-hydroxypregn-4-en-3-one + NADP(+) = progesterone + NADPH + H(+). The catalysed reaction is (20S)-hydroxypregn-4-en-3-one + NAD(+) = progesterone + NADH + H(+). It carries out the reaction (1R,2R)-1,2-dihydrobenzene-1,2-diol + NADP(+) = catechol + NADPH + H(+). The enzyme catalyses (S)-indan-1-ol + NAD(+) = indan-1-one + NADH + H(+). It catalyses the reaction (S)-indan-1-ol + NADP(+) = indan-1-one + NADPH + H(+). The catalysed reaction is 5alpha-androstane-3alpha,17beta-diol + NADP(+) = 17beta-hydroxy-5alpha-androstan-3-one + NADPH + H(+). It carries out the reaction 5alpha-androstane-3beta,17beta-diol + NADP(+) = 17beta-hydroxy-5alpha-androstan-3-one + NADPH + H(+). The enzyme catalyses 5alpha-androstane-3alpha,17beta-diol + NAD(+) = 17beta-hydroxy-5alpha-androstan-3-one + NADH + H(+). It catalyses the reaction 17beta-hydroxy-5alpha-androstan-3-one + NADP(+) = 5alpha-androstan-3,17-dione + NADPH + H(+). The catalysed reaction is androsterone + NADP(+) = 5alpha-androstan-3,17-dione + NADPH + H(+). It carries out the reaction androsterone + NADPH + H(+) = 5alpha-androstane-3alpha,17beta-diol + NADP(+). The enzyme catalyses 5alpha-androstane-3alpha,17beta-diol + NAD(+) = androsterone + NADH + H(+). It catalyses the reaction 17beta-estradiol + NADP(+) = estrone + NADPH + H(+). The catalysed reaction is 17beta-estradiol + NAD(+) = estrone + NADH + H(+). It carries out the reaction testosterone + NADP(+) = androst-4-ene-3,17-dione + NADPH + H(+). The enzyme catalyses 20alpha-hydroxy-5beta-pregnan-3-one + NADP(+) = 5beta-pregnan-3,20-dione + NADPH + H(+). It catalyses the reaction 3beta-hydroxy-5beta-pregnane-20-one + NADP(+) = 5beta-pregnan-3,20-dione + NADPH + H(+). The catalysed reaction is 3beta-hydroxy-5beta-pregnane-20-one + NADPH + H(+) = 3beta,20alpha-dihydroxy-5beta-pregnane + NADP(+). It carries out the reaction (3beta,5alpha,17beta)-3-hydroxyandrostan-17-yl sulfate + NADP(+) = 5alpha-dihydrotestosterone sulfate + NADPH + H(+). It participates in steroid metabolism. Functionally, cytosolic aldo-keto reductase that catalyzes the NADH and NADPH-dependent reduction of ketosteroids to hydroxysteroids. Most probably acts as a reductase in vivo since the oxidase activity measured in vitro is inhibited by physiological concentrations of NADPH. Displays a broad positional specificity acting on positions 3, 17 and 20 of steroids and regulates the metabolism of hormones like estrogens and androgens. May also reduce conjugated steroids such as 5alpha-dihydrotestosterone sulfate. Displays affinity for bile acids. This is Aldo-keto reductase family 1 member C1 (AKR1C1) from Pongo abelii (Sumatran orangutan).